The chain runs to 431 residues: MSLPIARIATISVHTSPLDQPGTGDAGGMNVYIVEIAKRLAARGVEVDIFTRATSRELPPVAELVSGVQVRHVVSGPFEELDKTELAGELCAFTSGVLRAEAAHDPGHYDLLHTHYWLSGQVGWVAKQRWGVPLVHSMHTMAKVKNAALAEGDTPEPAIRVLGEEQVTAGADRLVANTAEEARQLVELYGADPDRVGVVTPGVDLSLFRPRNGLLRGGADQARRRLGLPRDAYLLLFVGRIQPLKAPDVLLRAAALMVEADPALREHLVVAVVGGPSGSGRARPEGLQKLATELGIADLVRFEPPCPQPLLAEWYRAADVTVVPSHNESFGLVAAESQACGTPVVAAAVGGLRTAVRDGESGVLIDGHDPADYAAVLTRLRDEPRRRERLAAGAVRHARTLGWDATVDRLLEVYTGAKDTVNATAAGVLPR.

His14 contacts 1D-myo-inositol 3-phosphate. UDP-N-acetyl-alpha-D-glucosamine-binding positions include 20 to 21 and Gly28; that span reads QP. Residues 25–30, Lys83, Tyr116, Thr140, and Arg160 contribute to the 1D-myo-inositol 3-phosphate site; that span reads DAGGMN. Residues Arg240 and Lys245 each coordinate UDP-N-acetyl-alpha-D-glucosamine. The Mg(2+) site is built by Tyr315, Arg316, and Ala318. Positions 328 and 336 each coordinate UDP-N-acetyl-alpha-D-glucosamine. Thr342 contributes to the Mg(2+) binding site.

It belongs to the glycosyltransferase group 1 family. MshA subfamily. Homodimer.

The catalysed reaction is 1D-myo-inositol 3-phosphate + UDP-N-acetyl-alpha-D-glucosamine = 1D-myo-inositol 2-acetamido-2-deoxy-alpha-D-glucopyranoside 3-phosphate + UDP + H(+). Its function is as follows. Catalyzes the transfer of a N-acetyl-glucosamine moiety to 1D-myo-inositol 3-phosphate to produce 1D-myo-inositol 2-acetamido-2-deoxy-glucopyranoside 3-phosphate in the mycothiol biosynthesis pathway. The polypeptide is D-inositol 3-phosphate glycosyltransferase (Thermomonospora curvata (strain ATCC 19995 / DSM 43183 / JCM 3096 / KCTC 9072 / NBRC 15933 / NCIMB 10081 / Henssen B9)).